A 387-amino-acid chain; its full sequence is Ferrochelatase (387 aa).

Residues H196 and E277 each coordinate Fe cation.

The protein belongs to the ferrochelatase family.

The protein localises to the cytoplasm. The catalysed reaction is heme b + 2 H(+) = protoporphyrin IX + Fe(2+). It functions in the pathway porphyrin-containing compound metabolism; protoheme biosynthesis; protoheme from protoporphyrin-IX: step 1/1. In terms of biological role, catalyzes the ferrous insertion into protoporphyrin IX. The polypeptide is Ferrochelatase (Synechococcus sp. (strain RCC307)).